A 208-amino-acid polypeptide reads, in one-letter code: Peroxiredoxin (208 aa).

The Thioredoxin domain maps to 2 to 156 (PLLGDDFPQL…IVRAVKALQT (155 aa)). Cys-44 (cysteine sulfenic acid (-SOH) intermediate) is an active-site residue. Arg-119 contacts substrate.

This sequence belongs to the peroxiredoxin family. Prx6 subfamily. In terms of assembly, homodecamer. Pentamer of dimers that assemble into a ring structure.

The protein localises to the cytoplasm. The enzyme catalyses a hydroperoxide + [thioredoxin]-dithiol = an alcohol + [thioredoxin]-disulfide + H2O. Functionally, thiol-specific peroxidase that catalyzes the reduction of hydrogen peroxide and organic hydroperoxides to water and alcohols, respectively. Plays a role in cell protection against oxidative stress by detoxifying peroxides. The sequence is that of Peroxiredoxin from Treponema denticola (strain ATCC 35405 / DSM 14222 / CIP 103919 / JCM 8153 / KCTC 15104).